The primary structure comprises 424 residues: 3-phosphoshikimate 1-carboxyvinyltransferase (424 aa).

3 residues coordinate 3-phosphoshikimate: K21, S22, and R26. Residue K21 coordinates phosphoenolpyruvate. Positions 91 and 119 each coordinate phosphoenolpyruvate. Residues S164, Q166, D310, and K337 each coordinate 3-phosphoshikimate. Q166 is a phosphoenolpyruvate binding site. Catalysis depends on D310, which acts as the Proton acceptor. Residues R341 and R382 each contribute to the phosphoenolpyruvate site.

The protein belongs to the EPSP synthase family. In terms of assembly, monomer.

The protein resides in the cytoplasm. It carries out the reaction 3-phosphoshikimate + phosphoenolpyruvate = 5-O-(1-carboxyvinyl)-3-phosphoshikimate + phosphate. It functions in the pathway metabolic intermediate biosynthesis; chorismate biosynthesis; chorismate from D-erythrose 4-phosphate and phosphoenolpyruvate: step 6/7. In terms of biological role, catalyzes the transfer of the enolpyruvyl moiety of phosphoenolpyruvate (PEP) to the 5-hydroxyl of shikimate-3-phosphate (S3P) to produce enolpyruvyl shikimate-3-phosphate and inorganic phosphate. The protein is 3-phosphoshikimate 1-carboxyvinyltransferase of Campylobacter curvus (strain 525.92).